Consider the following 474-residue polypeptide: MSNHVNGVNGVNGVNGVKPVFPENAASKEYAKALDAADPLASFRDKFIIPSKANIQSKRLAKPNISADPCIYFCGNSLGLQPKATAKYMEAHLDTWASIGVNGHFTKIEDSPLDPWWVMAEQAAGSMSKLVGAAPEEVIAMGTLTSNLHLLLASFYKPTATKHKILLDWKAFPSDHYAIESHIAWHDGLDPKKSMVLIGPDEGEYEIPTQKILSIIDEHADEAALILLPGIQYYTGQYFDINTITEYAHSKGLMVGWDLAHAFANVELKLHEWDVDFAVWCTYKYANAGPGSMGGLFVHEKHGKVDYSQGEDSPQFRHRLAGWYGGDRSVRFKMDNKFRPIPGAGGFQLSTSSATDLTCLNASLSIFDQTSISELRRKSVQLTAYLEYLLLKDTTDETRPFRIITPSNPEERGAQLSLLLKPGLLQRVADKLQSASIVCDKREPGVVRVAPAPLYNTYSEVWQFVEQLKAAFQE.

Pyridoxal 5'-phosphate is bound by residues Leu-144, Thr-145, Phe-172–Asp-175, Asp-258, His-261, and Tyr-283. Lys-284 is modified (N6-(pyridoxal phosphate)lysine). 2 residues coordinate pyridoxal 5'-phosphate: Trp-323 and Thr-351.

The protein belongs to the kynureninase family. Homodimer. It depends on pyridoxal 5'-phosphate as a cofactor.

It localises to the cytoplasm. It catalyses the reaction L-kynurenine + H2O = anthranilate + L-alanine + H(+). It carries out the reaction 3-hydroxy-L-kynurenine + H2O = 3-hydroxyanthranilate + L-alanine + H(+). It functions in the pathway amino-acid degradation; L-kynurenine degradation; L-alanine and anthranilate from L-kynurenine: step 1/1. It participates in cofactor biosynthesis; NAD(+) biosynthesis; quinolinate from L-kynurenine: step 2/3. Functionally, catalyzes the cleavage of L-kynurenine (L-Kyn) and L-3-hydroxykynurenine (L-3OHKyn) into anthranilic acid (AA) and 3-hydroxyanthranilic acid (3-OHAA), respectively. This is Kynureninase 2 (bna5-2) from Emericella nidulans (strain FGSC A4 / ATCC 38163 / CBS 112.46 / NRRL 194 / M139) (Aspergillus nidulans).